A 380-amino-acid polypeptide reads, in one-letter code: 3-isopropylmalate dehydratase large subunit 2 (380 aa).

Positions 262, 320, and 323 each coordinate [4Fe-4S] cluster.

It belongs to the aconitase/IPM isomerase family. LeuC type 2 subfamily. As to quaternary structure, heterodimer of LeuC and LeuD. [4Fe-4S] cluster serves as cofactor.

The enzyme catalyses (2R,3S)-3-isopropylmalate = (2S)-2-isopropylmalate. The protein operates within amino-acid biosynthesis; L-leucine biosynthesis; L-leucine from 3-methyl-2-oxobutanoate: step 2/4. Its function is as follows. Catalyzes the isomerization between 2-isopropylmalate and 3-isopropylmalate, via the formation of 2-isopropylmaleate. This chain is 3-isopropylmalate dehydratase large subunit 2, found in Pyrococcus furiosus (strain ATCC 43587 / DSM 3638 / JCM 8422 / Vc1).